The chain runs to 159 residues: Protein Smg homolog (159 aa).

The protein belongs to the Smg family.

In Dichelobacter nodosus (strain VCS1703A), this protein is Protein Smg homolog.